The chain runs to 5005 residues: Bridge-like lipid transfer protein family member 1 (5005 aa).

The chain crosses the membrane as a helical span at residues 26 to 46 (NVVWLLVATILSCGWIIYLTY). Disordered stretches follow at residues 691-721 (LRPS…LPPD), 1218-1257 (LSLQ…SSVA), and 1269-1310 (GTKR…LKRQ). Composition is skewed to low complexity over residues 700–711 (RVVSSPSTSSRP) and 1226–1240 (SHSS…SSSS). Residues 1248-1257 (GEKESPSSVA) are compositionally biased toward basic and acidic residues. The span at 1278 to 1303 (SIPTEISGNSPVSPNTQDKSVGQSPL) shows a compositional bias: polar residues. Phosphoserine occurs at positions 1301, 1305, and 1323. Phosphothreonine is present on T1325. Disordered stretches follow at residues 1343–1376 (SDVS…SNSF), 1400–1427 (EFEP…QQID), 1521–1548 (TNKR…SSSF), and 1676–1704 (FSEN…QGQA). 2 positions are modified to phosphoserine: S1355 and S1406. Residues 1521–1530 (TNKRTSKSSL) show a composition bias toward basic residues. Polar residues predominate over residues 1691–1704 (TEQSTIGTTNQGQA). Residues S1805 and S1808 each carry the phosphoserine modification. Disordered stretches follow at residues 1924–1991 (DTER…PLMP), 2401–2420 (SDQN…QDDV), and 2598–2677 (TAGS…KDVV). 4 stretches are compositionally biased toward polar residues: residues 1931 to 1948 (LTSN…YNTD), 1959 to 1971 (TSPS…NSVS), 2401 to 2418 (SDQN…TSQD), and 2598 to 2608 (TAGSASPTPTF). 2 positions are modified to phosphoserine: S2601 and S2603. Positions 2619 to 2638 (SDFSRSSRGSLNGGNRVNNA) are enriched in low complexity. Residues 2643 to 2665 (TNNENNKKESRNKNSLGRSERRT) show a composition bias toward basic and acidic residues. S2755 carries the phosphoserine modification. The segment at 2928–2967 (RQPSTAPQPVKEDIATPLPSEKTPTSVNQTPVETNEFPQL) is disordered. Over residues 2949–2964 (KTPTSVNQTPVETNEF) the composition is skewed to polar residues. At S3562 the chain carries Phosphoserine. The span at 3612–3622 (PSYSRSKSISA) shows a compositional bias: polar residues. Disordered regions lie at residues 3612-3661 (PSYS…VTFN), 3686-3744 (SSNS…ERFY), 3821-3843 (RRSY…KKFQ), 3914-3954 (YGMK…KGKG), 4088-4146 (GTTY…SSSS), and 4325-4394 (QSAS…KAAS). A Phosphoserine modification is found at S3653. The span at 3686–3700 (SSNSEGSCSVFSSPK) shows a compositional bias: polar residues. The segment covering 3727–3736 (EDSEKDEKDE) has biased composition (acidic residues). The span at 3821-3837 (RRSYDRSSRSLDQDSPS) shows a compositional bias: basic and acidic residues. 2 stretches are compositionally biased toward polar residues: residues 3931-3940 (TVQSKTNTLL) and 4098-4113 (PGGN…SASK). Positions 4122 to 4146 (LGSPLGRSRHSSSQSDLTSSSSSSS) are enriched in low complexity. Phosphoserine is present on S4124. Polar residues predominate over residues 4325-4358 (QSASFTHMPQSPNVFNEHMTNSTMSPGTVGQSLK). A compositionally biased stretch (low complexity) spans 4359-4372 (SPASIRSRSVSDSS). The segment covering 4381-4394 (KTSTPFNKSNKAAS) has biased composition (polar residues).

In terms of tissue distribution, highly expressed in testis and ovary. Weakly or not expressed in other tissues.

Its subcellular location is the cell membrane. The protein resides in the endoplasmic reticulum membrane. It is found in the mitochondrion membrane. Functionally, tube-forming lipid transport protein which provides phosphatidylethanolamine for glycosylphosphatidylinositol (GPI) anchor synthesis in the endoplasmic reticulum. Plays a role in endosomal trafficking and endosome recycling. Also involved in the actin cytoskeleton and cilia structural dynamics. Acts as a regulator of phagocytosis. The sequence is that of Bridge-like lipid transfer protein family member 1 from Homo sapiens (Human).